The chain runs to 112 residues: Protein preY, mitochondrial (112 aa).

Residues 1–34 (MLTTTCRRLSQALQRPHALSAVAQRCLRAPGARS) constitute a mitochondrion transit peptide. The TRM112 domain occupies 49–95 (HPALLQFLVCPLSKKPLRYDASTNELINDELGIAYPIIDGVPNMIPQ).

It belongs to the PREY family. In terms of assembly, interacts (via TRM112 domain) with NDUFAF5; the interaction is direct and stabilizes NDUFAF5 protein. Interacts with COQ5; the interaction is direct, stabilizes COQ5 protein and associates PYURF with COQ enzyme complex.

It is found in the mitochondrion. In terms of biological role, in mitochondria, S-adenosylmethionine-dependent methyltransferase chaperone that supports both coenzyme Q biosynthesis, by stabilizing its components, such as COQ5, and NADH:ubiquinone oxidoreductase complex (complex I, MT-ND1) assembly, by stabilizing complex I assembly factors, such as NDUFAF5. In Rattus norvegicus (Rat), this protein is Protein preY, mitochondrial (Pyurf).